We begin with the raw amino-acid sequence, 1210 residues long: Homeodomain-interacting protein kinase 1 (1210 aa).

Residue Lys-25 forms a Glycyl lysine isopeptide (Lys-Gly) (interchain with G-Cter in SUMO); alternate linkage. Lys-25 participates in a covalent cross-link: Glycyl lysine isopeptide (Lys-Gly) (interchain with G-Cter in SUMO2); alternate. Residues Lys-120 and Lys-124 each participate in a glycyl lysine isopeptide (Lys-Gly) (interchain with G-Cter in SUMO2) cross-link. The 329-residue stretch at 190–518 (YEVLEFLGRG…PLKTLNHQFV (329 aa)) folds into the Protein kinase domain. ATP-binding positions include 196–204 (LGRGTFGQV) and Lys-219. The active-site Proton acceptor is the Asp-315. Positions 835–856 (QQQSSSLPSKKNKQSAPVSSKS) are disordered. The Nuclear localization signal 1 (NLS1) signature appears at 844 to 847 (KKNK). At Ser-872 the chain carries Phosphoserine. The interaction with TP53 stretch occupies residues 885-1093 (PVQDQHQPII…FQHGSPLHST (209 aa)). Residues 891 to 998 (QPIIIPDTPS…PLKTQLGDCT (108 aa)) are required for localization to nuclear speckles. Residues 902 to 926 (PVSVITIRSDTDEEEDNKYKPNSSS) are SUMO interaction motifs (SIM); required for nuclear localization and kinase activity. Residues 938–981 (TVNDSPDSDSSLSSPHPTDTLSALRGNSGTLLEGPGRPAADGIG) form a disordered region. Low complexity predominate over residues 941-959 (DSPDSDSSLSSPHPTDTLS). Lys-991 participates in a covalent cross-link: Glycyl lysine isopeptide (Lys-Gly) (interchain with G-Cter in SUMO2). Disordered regions lie at residues 1046-1069 (LSQNQQSSSASTSQERSSNPAPRR) and 1084-1104 (FQHGSPLHSTGHPHLAPAPAH). Low complexity-rich tracts occupy residues 1047–1063 (SQNQQSSSASTSQERSS) and 1095–1104 (HPHLAPAPAH). At Ser-1200 the chain carries Phosphoserine. A Glycyl lysine isopeptide (Lys-Gly) (interchain with G-Cter in SUMO) cross-link involves residue Lys-1203.

Belongs to the protein kinase superfamily. CMGC Ser/Thr protein kinase family. HIPK subfamily. In terms of assembly, interacts with Nkx1-2, Nkx2-5, MYB, PARK7, DAXX and p53/TP53. Part of a cytoplasmic complex made of HIPK1, DAB2IP and MAP3K5 in response to TNF. This complex formation promotes MAP3K5-JNK activation and subsequent apoptosis. Phosphorylated and activated by JNK1. Autophosphorylated. In terms of processing, sumoylated. When conjugated it is directed to nuclear speckles. SENP1-mediated desumoylation is mediated by TNF in response to stress stimuli, triggering transient translocation from nucleus to cytoplasm. Ubiquitously expressed, with high levels in reproductive tissues. Expressed in the epithelial layer of mammary gland, uterus and epididymis, in the corpus luteum, and in post-meiotic round spermatids.

Its subcellular location is the nucleus. The protein localises to the cytoplasm. It is found in the nucleus speckle. The catalysed reaction is L-seryl-[protein] + ATP = O-phospho-L-seryl-[protein] + ADP + H(+). It carries out the reaction L-threonyl-[protein] + ATP = O-phospho-L-threonyl-[protein] + ADP + H(+). In terms of biological role, serine/threonine-protein kinase involved in transcription regulation and TNF-mediated cellular apoptosis. Plays a role as a corepressor for homeodomain transcription factors. Phosphorylates DAXX and MYB. Phosphorylates DAXX in response to stress, and mediates its translocation from the nucleus to the cytoplasm. Inactivates MYB transcription factor activity by phosphorylation. Prevents MAP3K5-JNK activation in the absence of TNF. TNF triggers its translocation to the cytoplasm in response to stress stimuli, thus activating nuclear MAP3K5-JNK by derepression and promoting apoptosis. May be involved in anti-oxidative stress responses. Involved in the regulation of eye size, lens formation and retinal lamination during late embryogenesis. Promotes angiogenesis and to be involved in erythroid differentiation. May be involved in malignant squamous cell tumor formation. Phosphorylates PAGE4 at 'Thr-51' which is critical for the ability of PAGE4 to potentiate the transcriptional activator activity of JUN. The polypeptide is Homeodomain-interacting protein kinase 1 (Hipk1) (Mus musculus (Mouse)).